Consider the following 266-residue polypeptide: Putative peptidyl-prolyl cis-trans isomerase NifM (266 aa).

The region spanning 124 to 221 (PEQRLTRHLL…LGWHLLWCEA (98 aa)) is the PpiC domain.

The protein belongs to the PpiC/parvulin rotamase family.

It carries out the reaction [protein]-peptidylproline (omega=180) = [protein]-peptidylproline (omega=0). In terms of biological role, required for the activation and stabilization of the iron-component (NifH) of nitrogenase. Probable PPIase. In Klebsiella oxytoca, this protein is Putative peptidyl-prolyl cis-trans isomerase NifM (nifM).